We begin with the raw amino-acid sequence, 77 residues long: Protein OPG128 (77 aa).

It belongs to the orthopoxvirus OPG128 family. As to quaternary structure, interacts with sulfhydryl oxidase OPG072; this interaction involves formation of a transient disulfide-bonded intermediate, allowing disulfide bond transfer. Interacts with OPG088; this interaction involves formation of a transient disulfide-bonded intermediate, allowing disulfide bond transfer.

Late protein which probably participates in disulfide bond formation by functioning as a thiol-disulfide transfer protein between membrane-associated OPG072 and OPG08. The complete pathway for formation of disulfide bonds in intracellular virion membrane proteins sequentially involves oxidation of OPG072, OPG128 and OPG08. This is Protein OPG128 (OPG128) from Monkeypox virus.